The following is a 96-amino-acid chain: Co-chaperonin GroES (96 aa).

This sequence belongs to the GroES chaperonin family. Heptamer of 7 subunits arranged in a ring. Interacts with the chaperonin GroEL.

The protein resides in the cytoplasm. In terms of biological role, together with the chaperonin GroEL, plays an essential role in assisting protein folding. The GroEL-GroES system forms a nano-cage that allows encapsulation of the non-native substrate proteins and provides a physical environment optimized to promote and accelerate protein folding. GroES binds to the apical surface of the GroEL ring, thereby capping the opening of the GroEL channel. This chain is Co-chaperonin GroES, found in Polaromonas sp. (strain JS666 / ATCC BAA-500).